Reading from the N-terminus, the 627-residue chain is Hemocyanin D chain (627 aa).

The Cu cation site is built by H171, H175, H202, H322, H326, and H362. An N-linked (GlcNAc...) asparagine glycan is attached at N445. Residues C531 and C579 are joined by a disulfide bond.

It belongs to the tyrosinase family. Hemocyanin subfamily. Tarantula hemocyanin is a 24-chain polymer with seven different chains identified. As to expression, hemolymph.

The protein resides in the secreted. It localises to the extracellular space. Its function is as follows. Hemocyanins are copper-containing oxygen carriers occurring freely dissolved in the hemolymph of many mollusks and arthropods. This chain is Hemocyanin D chain (HCD), found in Aphonopelma sp. (American tarantula).